A 107-amino-acid chain; its full sequence is Basic phospholipase A2 sphenotoxin subunit B (107 aa).

Positions 27, 29, and 31 each coordinate Ca(2+). Disulfide bonds link cysteine 28–cysteine 44, cysteine 43–cysteine 91, cysteine 50–cysteine 88, cysteine 57–cysteine 81, and cysteine 75–cysteine 86. The active site involves histidine 47. Ca(2+) is bound at residue aspartate 48. Aspartate 89 is a catalytic residue.

Belongs to the phospholipase A2 family. Group II subfamily. D49 sub-subfamily. Heterodimer of A and B chains; non-covalently linked. The acidic protein (B chain) has phospholipase A2 activity and the A chain weakly inhibits the B chain enzymatic activity but potentiates its lethal potency. Expressed by the venom gland.

Its subcellular location is the secreted. It catalyses the reaction a 1,2-diacyl-sn-glycero-3-phosphocholine + H2O = a 1-acyl-sn-glycero-3-phosphocholine + a fatty acid + H(+). Its function is as follows. Heterodimer A-B: Sphenotoxin is a potent neurotoxin that possesses phospholipase A2 (PLA2) activity. It consists of a non-covalent association of a basic PLA2 subunit B with a non-enzymatic subunit A. Functionally, monomer B: Not found in vivo. In vitro, potent neurotoxin that possesses phospholipase A2 (PLA2) activity and exerts a lethal action by blocking neuromuscular transmission. Induces paralysis of the hind legs and neuromuscular blockade in mouse phrenic nerve-diaphragm preparations. PLA2 catalyzes the calcium-dependent hydrolysis of the 2-acyl groups in 3-sn-phosphoglycerides. In Ophryacus sphenophrys (Broad-horned pitviper), this protein is Basic phospholipase A2 sphenotoxin subunit B.